Reading from the N-terminus, the 299-residue chain is Inosose dehydratase (299 aa).

Belongs to the IolE/MocC family. Glutathione serves as cofactor. Co(2+) is required as a cofactor. It depends on Mn(2+) as a cofactor.

It catalyses the reaction scyllo-inosose = 3D-3,5/4-trihydroxycyclohexane-1,2-dione + H2O. Functionally, catalyzes the dehydration of inosose (2-keto-myo-inositol, 2KMI or 2,4,6/3,5-pentahydroxycyclohexanone) to 3D-(3,5/4)-trihydroxycyclohexane-1,2-dione (D-2,3-diketo-4-deoxy-epi-inositol). The polypeptide is Inosose dehydratase (Klebsiella pneumoniae subsp. pneumoniae (strain ATCC 700721 / MGH 78578)).